The sequence spans 1222 residues: PAN2-PAN3 deadenylation complex catalytic subunit PAN2 (1222 aa).

WD repeat units follow at residues 104–143 (PEMTELRCMSFTAQPHKIIVAGLQSAMFIIDVEKGAIVDQ) and 276–315 (ANVAFMLGLEVSPSGEALAINDAECSIHLWGSPSKIHFNE). Residues 316-451 (IGKETEFSDI…GLKINGETKE (136 aa)) are linker. Residues 452-821 (DPLLKYSNVE…SPCTLAYQIS (370 aa)) form the USP domain. Residues 871–1027 (ALDTEFVDLE…WAVFKEYIQE (157 aa)) enclose the Exonuclease domain. Positions 873, 875, and 982 each coordinate a divalent metal cation. A disordered region spans residues 1035 to 1067 (TSITTTTNPNIHDANTSTTTTTAITTTPPEGHD). Residues 1050–1061 (TSTTTTTAITTT) are compositionally biased toward low complexity. Aspartate 1071 contacts a divalent metal cation. Disordered stretches follow at residues 1110–1152 (PARY…LSGR) and 1167–1222 (ASVT…SPMR). Over residues 1119 to 1133 (PNPNNNNINNGVNPN) the composition is skewed to low complexity. Positions 1134–1144 (GLSTPGSTNPI) are enriched in polar residues. A compositionally biased stretch (low complexity) spans 1180 to 1191 (NGSMSGSTPSTP). Over residues 1207–1216 (SFGGAKGLTF) the composition is skewed to gly residues.

The protein belongs to the peptidase C19 family. PAN2 subfamily. Forms a heterotrimer with an asymmetric homodimer of the regulatory subunit PAN3 to form the poly(A)-nuclease (PAN) deadenylation complex. Requires a divalent metal cation as cofactor.

Its subcellular location is the cytoplasm. It catalyses the reaction Exonucleolytic cleavage of poly(A) to 5'-AMP.. Positively regulated by the regulatory subunit PAN3. Its function is as follows. Catalytic subunit of the poly(A)-nuclease (PAN) deadenylation complex, one of two cytoplasmic mRNA deadenylases involved in mRNA turnover. PAN specifically shortens poly(A) tails of RNA and the activity is stimulated by poly(A)-binding protein PAB1. PAN deadenylation is followed by rapid degradation of the shortened mRNA tails by the CCR4-NOT complex. Deadenylated mRNAs are then degraded by two alternative mechanisms, namely exosome-mediated 3'-5' exonucleolytic degradation, or deadenylation-dependent mRNA decaping and subsequent 5'-3' exonucleolytic degradation by XRN1. May also be involved in post-transcriptional maturation of mRNA poly(A) tails. The sequence is that of PAN2-PAN3 deadenylation complex catalytic subunit PAN2 from Coccidioides immitis (strain RS) (Valley fever fungus).